Reading from the N-terminus, the 537-residue chain is Actin-histidine N-methyltransferase (537 aa).

The span at 1–12 (MGKNTKRNKKTK) shows a compositional bias: basic residues. The interval 1–50 (MGKNTKRNKKTKQQQQQPQQNGVTASASGTAVEDFEDQQAASSLPSLNGK) is disordered. S-adenosyl-L-methionine contacts are provided by residues Arg114, 143 to 145 (YQL), Arg299, 325 to 329 (DMANH), and 375 to 377 (NGF). The SET domain maps to 133-364 (EGLEIAIFPG…TGEQFFIYYG (232 aa)).

Belongs to the class V-like SAM-binding methyltransferase superfamily. SETD3 actin-histidine methyltransferase family.

The protein localises to the cytoplasm. The protein resides in the nucleus. The enzyme catalyses L-histidyl-[protein] + S-adenosyl-L-methionine = N(tele)-methyl-L-histidyl-[protein] + S-adenosyl-L-homocysteine + H(+). In terms of biological role, protein-histidine N-methyltransferase that specifically mediates 3-methylhistidine (tele-methylhistidine) methylation of actin at 'His-74'. The chain is Actin-histidine N-methyltransferase from Drosophila melanogaster (Fruit fly).